Consider the following 262-residue polypeptide: Pyridoxine 5'-phosphate synthase (262 aa).

A 3-amino-2-oxopropyl phosphate-binding site is contributed by Asn6. Residue 8-9 (DH) coordinates 1-deoxy-D-xylulose 5-phosphate. Position 17 (Arg17) interacts with 3-amino-2-oxopropyl phosphate. The active-site Proton acceptor is the His43. 1-deoxy-D-xylulose 5-phosphate is bound by residues Arg45 and His50. The active-site Proton acceptor is Glu70. A 1-deoxy-D-xylulose 5-phosphate-binding site is contributed by Thr102. His215 (proton donor) is an active-site residue. Residues Gly216 and 237–238 (GH) each bind 3-amino-2-oxopropyl phosphate.

It belongs to the PNP synthase family. As to quaternary structure, homooctamer; tetramer of dimers.

The protein resides in the cytoplasm. It catalyses the reaction 3-amino-2-oxopropyl phosphate + 1-deoxy-D-xylulose 5-phosphate = pyridoxine 5'-phosphate + phosphate + 2 H2O + H(+). Its pathway is cofactor biosynthesis; pyridoxine 5'-phosphate biosynthesis; pyridoxine 5'-phosphate from D-erythrose 4-phosphate: step 5/5. Functionally, catalyzes the complicated ring closure reaction between the two acyclic compounds 1-deoxy-D-xylulose-5-phosphate (DXP) and 3-amino-2-oxopropyl phosphate (1-amino-acetone-3-phosphate or AAP) to form pyridoxine 5'-phosphate (PNP) and inorganic phosphate. In Helicobacter pylori (strain J99 / ATCC 700824) (Campylobacter pylori J99), this protein is Pyridoxine 5'-phosphate synthase.